We begin with the raw amino-acid sequence, 154 residues long: Large ribosomal subunit protein uL13 (154 aa).

Belongs to the universal ribosomal protein uL13 family. In terms of assembly, part of the 50S ribosomal subunit.

In terms of biological role, this protein is one of the early assembly proteins of the 50S ribosomal subunit, although it is not seen to bind rRNA by itself. It is important during the early stages of 50S assembly. This is Large ribosomal subunit protein uL13 from Rhizobium johnstonii (strain DSM 114642 / LMG 32736 / 3841) (Rhizobium leguminosarum bv. viciae).